Here is a 366-residue protein sequence, read N- to C-terminus: GTP cyclohydrolase 1 type 2 homolog (366 aa).

Zn(2+)-binding residues include histidine 64, histidine 65, aspartate 102, histidine 326, and glutamate 329.

It belongs to the GTP cyclohydrolase I type 2/NIF3 family. As to quaternary structure, homohexamer.

The sequence is that of GTP cyclohydrolase 1 type 2 homolog from Staphylococcus aureus (strain MSSA476).